Reading from the N-terminus, the 149-residue chain is Myosin light chain 1 (149 aa).

EF-hand domains are found at residues 2-37, 81-116, and 117-149; these read SATR…IGYN, AKTE…LGEK, and LTDA…VLRQ. Asp15, Asp94, Thr98, Lys100, and Asp105 together coordinate Ca(2+). Lys116 is covalently cross-linked (Glycyl lysine isopeptide (Lys-Gly) (interchain with G-Cter in ubiquitin)). 3 residues coordinate Ca(2+): Asp123, Lys127, and Asp132.

Interacts with MYO1, MYO2 and IQG1 by binding to their IQ domains. Interacts with SEC4.

The protein localises to the bud neck. It localises to the bud tip. In terms of biological role, essential light chain for the class II conventional myosin MYO1. Also acts as light chain for the class V unconventional myosin MYO2 and for IQG1. Involved in the assembly of the contractile actomyosin ring at the bud neck during cytokinesis by recruiting IQG1 to the bud neck. Also required for chitin and MYO2-dependent secretory vesicle deposition to the center of the bud neck for septum formation. May stabilize MYO2 by binding to its IQ domains. Its major function is probably not to regulate MYO1 activity, but rather to coordinate actin ring formation and targeted membrane deposition during cytokinesis via its interactions with MYO1, IQG1 and MYO2. In Saccharomyces cerevisiae (strain ATCC 204508 / S288c) (Baker's yeast), this protein is Myosin light chain 1 (MLC1).